A 610-amino-acid chain; its full sequence is NTPase KAP family P-loop domain-containing protein 1 (610 aa).

The KAP NTPase domain maps to 1 to 414 (MQQEAAQRES…NTVPITVRLL (414 aa)). Transmembrane regions (helical) follow at residues 22 to 42 (AVSG…QPII), 118 to 138 (VCLG…LLYL), and 157 to 177 (VFGG…VYSV). Residues 540–587 (ALKPPSPPKSPTRDTPHAAHRANSASRAPPSGRASGQAGEGHHTGDLA) form a disordered region. The segment covering 560-575 (RANSASRAPPSGRASG) has biased composition (low complexity).

It localises to the membrane. In Homo sapiens (Human), this protein is NTPase KAP family P-loop domain-containing protein 1 (NKPD1).